We begin with the raw amino-acid sequence, 278 residues long: Casein kinase II subunit beta (278 aa).

Disordered regions lie at residues 1 to 22 (MSQE…DSGA) and 78 to 111 (DEEE…RNKS). Serine 2 carries the post-translational modification N-acetylserine. A Phosphoserine modification is found at serine 2. The segment covering 78–94 (DEEEDEDDVVEEDEVDQ) has biased composition (acidic residues).

It belongs to the casein kinase 2 subunit beta family. As to quaternary structure, tetramer composed of an alpha subunit, an alpha' subunit, one beta subunit and one beta' subunit. Interacts with FACT subunits POB3 and SPT16. interacts with YTA7. In terms of processing, phosphorylated by alpha subunit.

Its function is as follows. Regulatory subunit of casein kinase II/CK2. As part of the kinase complex regulates the basal catalytic activity of the alpha subunit a constitutively active serine/threonine-protein kinase that phosphorylates a large number of substrates containing acidic residues C-terminal to the phosphorylated serine or threonine. This chain is Casein kinase II subunit beta (CKB1), found in Saccharomyces cerevisiae (strain ATCC 204508 / S288c) (Baker's yeast).